Consider the following 290-residue polypeptide: Nucleotide-binding protein Clos_0574 (290 aa).

Residue 8–15 participates in ATP binding; that stretch reads GLSGAGKS. 59 to 62 contributes to the GTP binding site; that stretch reads DIRG.

This sequence belongs to the RapZ-like family.

Displays ATPase and GTPase activities. This Alkaliphilus oremlandii (strain OhILAs) (Clostridium oremlandii (strain OhILAs)) protein is Nucleotide-binding protein Clos_0574.